A 186-amino-acid polypeptide reads, in one-letter code: UPF0301 protein Neut_0448 (186 aa).

Belongs to the UPF0301 (AlgH) family.

The polypeptide is UPF0301 protein Neut_0448 (Nitrosomonas eutropha (strain DSM 101675 / C91 / Nm57)).